We begin with the raw amino-acid sequence, 87 residues long: MAKHLKFIARTVMVQEGNVEGAYRTLNRILTTDGLTEVISRRRYYEKPCRRRQRESYETCRRIYNMEMARKINFLMRKNRADPWLGC.

This sequence belongs to the bacterial ribosomal protein bS21 family. Component of the mitochondrial ribosome small subunit (28S) which comprises a 12S rRNA and about 30 distinct proteins.

Its subcellular location is the mitochondrion. The chain is Small ribosomal subunit protein bS21m (Mrps21) from Mus musculus (Mouse).